Consider the following 704-residue polypeptide: Polyribonucleotide nucleotidyltransferase (704 aa).

The Mg(2+) site is built by aspartate 488 and aspartate 494. In terms of domain architecture, KH spans 555-614 (PRITTIKINPEKIRDVIGKGGATIRALTEETGTTIELDDDGTVKIASSNGEATKEAIRRI). One can recognise an S1 motif domain in the interval 624-692 (GTVYNGKVVR…RQGRVRLSMK (69 aa)).

This sequence belongs to the polyribonucleotide nucleotidyltransferase family. As to quaternary structure, component of the RNA degradosome, which is a multiprotein complex involved in RNA processing and mRNA degradation. It depends on Mg(2+) as a cofactor.

The protein localises to the cytoplasm. It carries out the reaction RNA(n+1) + phosphate = RNA(n) + a ribonucleoside 5'-diphosphate. Involved in mRNA degradation. Catalyzes the phosphorolysis of single-stranded polyribonucleotides processively in the 3'- to 5'-direction. The protein is Polyribonucleotide nucleotidyltransferase of Shewanella halifaxensis (strain HAW-EB4).